Here is a 391-residue protein sequence, read N- to C-terminus: Elongation factor Tu (391 aa).

Residues 10–201 enclose the tr-type G domain; the sequence is KPHVNIGTIG…AVDAYIPTPE (192 aa). Residues 19–26 are G1; sequence GHVDHGKT. 19-26 contributes to the GTP binding site; it reads GHVDHGKT. T26 lines the Mg(2+) pocket. The segment at 55–59 is G2; it reads GITIS. Residues 76 to 79 are G3; it reads DCPG. GTP contacts are provided by residues 76–80 and 131–134; these read DCPGH and NKVD. Residues 131 to 134 are G4; it reads NKVD. Residues 169-171 are G5; the sequence is SAL.

The protein belongs to the TRAFAC class translation factor GTPase superfamily. Classic translation factor GTPase family. EF-Tu/EF-1A subfamily. As to quaternary structure, monomer.

Its subcellular location is the cytoplasm. It carries out the reaction GTP + H2O = GDP + phosphate + H(+). Its function is as follows. GTP hydrolase that promotes the GTP-dependent binding of aminoacyl-tRNA to the A-site of ribosomes during protein biosynthesis. This is Elongation factor Tu from Rhizobium johnstonii (strain DSM 114642 / LMG 32736 / 3841) (Rhizobium leguminosarum bv. viciae).